Here is a 98-residue protein sequence, read N- to C-terminus: Nucleoid-associated protein pc0477 (98 aa).

Belongs to the YbaB/EbfC family. As to quaternary structure, homodimer.

Its subcellular location is the cytoplasm. It is found in the nucleoid. Binds to DNA and alters its conformation. May be involved in regulation of gene expression, nucleoid organization and DNA protection. This Protochlamydia amoebophila (strain UWE25) protein is Nucleoid-associated protein pc0477.